The chain runs to 262 residues: Thiazole synthase (262 aa).

Residue Lys96 is the Schiff-base intermediate with DXP of the active site. 1-deoxy-D-xylulose 5-phosphate contacts are provided by residues Gly157, 184–185 (AG), and 206–207 (NT).

It belongs to the ThiG family. In terms of assembly, homotetramer. Forms heterodimers with either ThiH or ThiS.

It is found in the cytoplasm. The enzyme catalyses [ThiS sulfur-carrier protein]-C-terminal-Gly-aminoethanethioate + 2-iminoacetate + 1-deoxy-D-xylulose 5-phosphate = [ThiS sulfur-carrier protein]-C-terminal Gly-Gly + 2-[(2R,5Z)-2-carboxy-4-methylthiazol-5(2H)-ylidene]ethyl phosphate + 2 H2O + H(+). The protein operates within cofactor biosynthesis; thiamine diphosphate biosynthesis. Its function is as follows. Catalyzes the rearrangement of 1-deoxy-D-xylulose 5-phosphate (DXP) to produce the thiazole phosphate moiety of thiamine. Sulfur is provided by the thiocarboxylate moiety of the carrier protein ThiS. In vitro, sulfur can be provided by H(2)S. The protein is Thiazole synthase of Legionella pneumophila (strain Lens).